We begin with the raw amino-acid sequence, 302 residues long: Sulfotransferase 1C4 (302 aa).

Position 55–60 (Lys55–Trp60) interacts with 3'-phosphoadenylyl sulfate. Residue Lys113–His115 coordinates substrate. The Proton acceptor role is filled by His115. 3'-phosphoadenylyl sulfate is bound by residues Arg137, Ser145, Tyr200, Thr234 to Met239, and Phe262 to Gly266.

The protein belongs to the sulfotransferase 1 family. In terms of tissue distribution, expressed in liver, kidney and jejunum.

It is found in the cytoplasm. The protein resides in the cytosol. It catalyses the reaction a phenol + 3'-phosphoadenylyl sulfate = an aryl sulfate + adenosine 3',5'-bisphosphate + H(+). The catalysed reaction is 17beta-estradiol + 3'-phosphoadenylyl sulfate = 17beta-estradiol 3-sulfate + adenosine 3',5'-bisphosphate + H(+). The enzyme catalyses bisphenol A + 3'-phosphoadenylyl sulfate = bisphenyl A sulfate + adenosine 3',5'-bisphosphate + H(+). Sulfotransferase that utilizes 3'-phospho-5'-adenylyl sulfate (PAPS) as sulfonate donor to catalyze the sulfate conjugation of phenolic compounds and estrogen (E2). Can also sulfonate estrogenic compounds, however, the dietary flavonoids (phytoestrogen) and environmental estrogens, like bisphenol A are better substrates than 17beta-estradiol (E2). The chain is Sulfotransferase 1C4 (SULT1C4) from Macaca fascicularis (Crab-eating macaque).